A 760-amino-acid polypeptide reads, in one-letter code: ATP-dependent RNA helicase dbp7 (760 aa).

The segment covering 23–34 (KLKGGTWRDRLS) has biased composition (basic and acidic residues). The interval 23 to 129 (KLKGGTWRDR…EPVEDAKPTN (107 aa)) is disordered. Residues 38–47 (IAQHRTKNPR) show a composition bias toward basic residues. Positions 58-72 (KGPQNPNRIQVSSSR) are enriched in polar residues. Residues 77–94 (QKTDADGDNEKSRHDNKQ) are compositionally biased toward basic and acidic residues. A compositionally biased stretch (polar residues) spans 99–110 (FVSSLFSKNPTP). The Q motif motif lies at 137–166 (DTFTNLGLSPSLAAHLLTKLELKAPTGIQK). The region spanning 170 to 372 (SQLLKEDSDA…EISLKDAVHI (203 aa)) is the Helicase ATP-binding domain. Residue 183-190 (AETGSGKT) participates in ATP binding. Residues 308 to 311 (DEGD) carry the DEAD box motif. Residues 396–609 (QLKQSYAIVA…LTRTTAEDIL (214 aa)) form the Helicase C-terminal domain. Disordered regions lie at residues 453–490 (YRDE…AVAF) and 692–760 (SKIN…FNLA). Residues 456 to 470 (ESEDEDEEKEDDDED) show a composition bias toward acidic residues. Basic and acidic residues predominate over residues 701 to 716 (PGDKEAKKDYKAERNT). Residues 731 to 740 (QPSNDATSAA) are compositionally biased toward polar residues.

It belongs to the DEAD box helicase family. DDX31/DBP7 subfamily.

Its subcellular location is the nucleus. It is found in the nucleolus. It catalyses the reaction ATP + H2O = ADP + phosphate + H(+). In terms of biological role, ATP-binding RNA helicase involved in the biogenesis of 60S ribosomal subunits and is required for the normal formation of 25S and 5.8S rRNAs. The chain is ATP-dependent RNA helicase dbp7 (dbp7) from Aspergillus oryzae (strain ATCC 42149 / RIB 40) (Yellow koji mold).